Consider the following 306-residue polypeptide: Homoserine kinase (306 aa).

90–100 (PLARGLGSSAS) contacts ATP.

This sequence belongs to the GHMP kinase family. Homoserine kinase subfamily.

It localises to the cytoplasm. It catalyses the reaction L-homoserine + ATP = O-phospho-L-homoserine + ADP + H(+). It functions in the pathway amino-acid biosynthesis; L-threonine biosynthesis; L-threonine from L-aspartate: step 4/5. Catalyzes the ATP-dependent phosphorylation of L-homoserine to L-homoserine phosphate. The chain is Homoserine kinase from Staphylococcus epidermidis (strain ATCC 12228 / FDA PCI 1200).